The chain runs to 705 residues: Solute carrier family 12 member 8 (705 aa).

Transmembrane regions (helical) follow at residues 38–58 (FGTW…VVLF), 69–89 (GVLL…ITVL), 92–112 (IGVA…ISSV), 121–141 (VGLL…TGFA), 159–179 (ISVA…KWII), 181–201 (LQLL…VGSF), 232–252 (FFTV…GFNM), 268–288 (LAAV…LGAV), 306–326 (LVGF…CMGG), 368–388 (LVTM…VVTI), and 390–410 (FMLT…AHCG). The disordered stretch occupies residues 472–512 (ESRQLGSREGNNPKNQKRKGKKGAKQTLQDSFLLDPGSPLS). The segment covering 486–495 (NQKRKGKKGA) has biased composition (basic residues). Helical transmembrane passes span 587-607 (WVSL…QWLY) and 612-632 (MGVA…LYLG).

Belongs to the SLC12A transporter family.

Its subcellular location is the membrane. In terms of biological role, cation/chloride cotransporter that may play a role in the control of keratinocyte proliferation. This is Solute carrier family 12 member 8 (Slc12a8) from Mus musculus (Mouse).